The sequence spans 647 residues: Threonine--tRNA ligase (647 aa).

In terms of domain architecture, TGS spans 1 to 63 (MADISIKFPD…ASDGSIEIVT (63 aa)). The segment at 242–540 (DHRVIGNQLD…LTEIYKGAFP (299 aa)) is catalytic. The Zn(2+) site is built by cysteine 336, histidine 387, and histidine 517.

The protein belongs to the class-II aminoacyl-tRNA synthetase family. In terms of assembly, homodimer. Zn(2+) serves as cofactor.

It is found in the cytoplasm. It carries out the reaction tRNA(Thr) + L-threonine + ATP = L-threonyl-tRNA(Thr) + AMP + diphosphate + H(+). Functionally, catalyzes the attachment of threonine to tRNA(Thr) in a two-step reaction: L-threonine is first activated by ATP to form Thr-AMP and then transferred to the acceptor end of tRNA(Thr). Also edits incorrectly charged L-seryl-tRNA(Thr). The polypeptide is Threonine--tRNA ligase (Levilactobacillus brevis (strain ATCC 367 / BCRC 12310 / CIP 105137 / JCM 1170 / LMG 11437 / NCIMB 947 / NCTC 947) (Lactobacillus brevis)).